A 90-amino-acid polypeptide reads, in one-letter code: Sec-independent protein translocase protein TatA (90 aa).

Residues 1 to 21 (MGLPGGWELVLIVGVLVLLFG) traverse the membrane as a helical segment. Residues 42–60 (EARGMKEDEEAAKREKQAK) are compositionally biased toward basic and acidic residues. The disordered stretch occupies residues 42–90 (EARGMKEDEEAAKREKQAKSEPQQLTAGESSAPTVASPVEETQRNDSKK). Residues 61–75 (SEPQQLTAGESSAPT) show a composition bias toward polar residues.

The protein belongs to the TatA/E family. As to quaternary structure, the Tat system comprises two distinct complexes: a TatABC complex, containing multiple copies of TatA, TatB and TatC subunits, and a separate TatA complex, containing only TatA subunits. Substrates initially bind to the TatABC complex, which probably triggers association of the separate TatA complex to form the active translocon.

The protein resides in the cell membrane. Functionally, part of the twin-arginine translocation (Tat) system that transports large folded proteins containing a characteristic twin-arginine motif in their signal peptide across membranes. TatA could form the protein-conducting channel of the Tat system. This Saccharopolyspora erythraea (strain ATCC 11635 / DSM 40517 / JCM 4748 / NBRC 13426 / NCIMB 8594 / NRRL 2338) protein is Sec-independent protein translocase protein TatA.